A 435-amino-acid polypeptide reads, in one-letter code: 3-ketoacyl-CoA thiolase (435 aa).

The Acyl-thioester intermediate role is filled by cysteine 98. Catalysis depends on proton acceptor residues histidine 391 and cysteine 421.

It belongs to the thiolase-like superfamily. Thiolase family. In terms of assembly, heterotetramer of two alpha chains (FadJ) and two beta chains (FadI).

Its subcellular location is the cytoplasm. The enzyme catalyses an acyl-CoA + acetyl-CoA = a 3-oxoacyl-CoA + CoA. The protein operates within lipid metabolism; fatty acid beta-oxidation. Functionally, catalyzes the final step of fatty acid oxidation in which acetyl-CoA is released and the CoA ester of a fatty acid two carbons shorter is formed. This Vibrio vulnificus (strain CMCP6) protein is 3-ketoacyl-CoA thiolase.